The primary structure comprises 147 residues: Ribosome maturation factor RimP (147 aa).

The protein belongs to the RimP family.

It is found in the cytoplasm. Required for maturation of 30S ribosomal subunits. The protein is Ribosome maturation factor RimP of Legionella pneumophila (strain Paris).